The sequence spans 303 residues: Protein REVEILLE 5 (303 aa).

The HTH myb-type domain occupies 54-108 (TIKKSRENWTDQEHDKFLEALHLFDRDWKKIEAFVGSKTVVQIRSHAQKYFLKVQ). A DNA-binding region (H-T-H motif) is located at residues 81 to 104 (WKKIEAFVGSKTVVQIRSHAQKYF). Positions 109 to 130 (KSGANEHLPPPRPKRKASHPYP) are disordered.

The protein localises to the nucleus. Its function is as follows. Probable transcription factor. This is Protein REVEILLE 5 (RVE5) from Arabidopsis thaliana (Mouse-ear cress).